We begin with the raw amino-acid sequence, 569 residues long: Spermatogenesis-associated protein 16 (569 aa).

The protein belongs to the SPATA16 family.

The protein resides in the golgi apparatus. The protein localises to the cytoplasmic vesicle. It is found in the secretory vesicle. It localises to the acrosome. In terms of biological role, essential for spermiogenesis and male fertility. Involved in the formation of sperm acrosome during spermatogenesis. This Macaca fascicularis (Crab-eating macaque) protein is Spermatogenesis-associated protein 16 (SPATA16).